Reading from the N-terminus, the 569-residue chain is MPYRISRQAYAETYGPTTGDRIRLADTDLILEVEKDYTVYGDEVKFGGGKVIRDGMGQSQTPRAEGAVDTVITNALILDWWGIVKADVGLKDGRIVGIGKAGNPDTQEGVTIVVGPGTEAIAGEGHILTAGGIDTHIHFICPQQIETALASGVTTLMGGGTGPATGTNATTCTPGAFHIGRMLQAAEGLPVNLGFFGKGNASTPEALEEQVRAGACGLKLHEDWGTTPATIDACLSVADRMDVQVCIHTDTLNEAGFVEDTIAAIKGRTIHTFHTEGAGGGHAPDIIKICGEANVLPSSTNPTRPYTRNTLEEHLDMLMVCHHLDPKIPEDVAFAESRIRRETIAAEDILHDLGSFSIIASDSQAMGRVGEVITRTFQTAHKMKVQRGALPEDSARNDNHRLKRYIAKVTINPALAHGISSEVGSIETGKLADLVLWKPGFFGIRPELVVKGGSIVWAQMGDANASIPTPGPVHGRPMFGAFGKALAPSCLTFVSEAAMDADIQRQLGLERTCMAVRDTRSVGKSALKLNSALPKVSVDPQTYEVFADGELLTCEPAEVLPLAQRYLLL.

A Urease domain is found at 131-569; sequence GGIDTHIHFI…LPLAQRYLLL (439 aa). The Ni(2+) site is built by H136, H138, and K219. Residue K219 is modified to N6-carboxylysine. H221 provides a ligand contact to substrate. Ni(2+) contacts are provided by H248 and H274. Catalysis depends on H322, which acts as the Proton donor. Position 362 (D362) interacts with Ni(2+).

It belongs to the metallo-dependent hydrolases superfamily. Urease alpha subunit family. In terms of assembly, heterotrimer of UreA (gamma), UreB (beta) and UreC (alpha) subunits. Three heterotrimers associate to form the active enzyme. Ni cation is required as a cofactor. Carboxylation allows a single lysine to coordinate two nickel ions.

It is found in the cytoplasm. It catalyses the reaction urea + 2 H2O + H(+) = hydrogencarbonate + 2 NH4(+). Its pathway is nitrogen metabolism; urea degradation; CO(2) and NH(3) from urea (urease route): step 1/1. This chain is Urease subunit alpha, found in Synechococcus sp. (strain CC9605).